Here is a 485-residue protein sequence, read N- to C-terminus: Glutamate--tRNA ligase 1 (485 aa).

The short motif at 10-20 (PSPTGAIHIGN) is the 'HIGH' region element. Positions 252–256 (KLSKR) match the 'KMSKS' region motif. Position 255 (lysine 255) interacts with ATP.

This sequence belongs to the class-I aminoacyl-tRNA synthetase family. Glutamate--tRNA ligase type 1 subfamily. As to quaternary structure, monomer.

The protein resides in the cytoplasm. The enzyme catalyses tRNA(Glu) + L-glutamate + ATP = L-glutamyl-tRNA(Glu) + AMP + diphosphate. Its function is as follows. Catalyzes the attachment of glutamate to tRNA(Glu) in a two-step reaction: glutamate is first activated by ATP to form Glu-AMP and then transferred to the acceptor end of tRNA(Glu). In Thermoanaerobacter sp. (strain X514), this protein is Glutamate--tRNA ligase 1.